The following is a 294-amino-acid chain: 4-hydroxy-tetrahydrodipicolinate synthase (294 aa).

Residue Thr47 coordinates pyruvate. The active-site Proton donor/acceptor is the Tyr135. Lys163 acts as the Schiff-base intermediate with substrate in catalysis. A pyruvate-binding site is contributed by Ile206.

This sequence belongs to the DapA family. As to quaternary structure, homodimer.

It localises to the cytoplasm. It carries out the reaction L-aspartate 4-semialdehyde + pyruvate = (2S,4S)-4-hydroxy-2,3,4,5-tetrahydrodipicolinate + H2O + H(+). The protein operates within amino-acid biosynthesis; L-lysine biosynthesis via DAP pathway; (S)-tetrahydrodipicolinate from L-aspartate: step 3/4. In terms of biological role, catalyzes the condensation of (S)-aspartate-beta-semialdehyde [(S)-ASA] and pyruvate to 4-hydroxy-tetrahydrodipicolinate (HTPA). In Staphylococcus epidermidis (strain ATCC 35984 / DSM 28319 / BCRC 17069 / CCUG 31568 / BM 3577 / RP62A), this protein is 4-hydroxy-tetrahydrodipicolinate synthase.